An 821-amino-acid chain; its full sequence is Lysosomal beta glucosidase (821 aa).

An N-terminal signal peptide occupies residues 1-24; that stretch reads MKTIKSLFLLSLLIVNLLISSTYG. Residues 25-69 constitute a propeptide that is removed on maturation; that stretch reads SSIRVSIVGGEEAEVIEKPRTFGNKRELKLEYSQIYPKKQLNQEN. Residues Asn-113, Asn-146, and Asn-266 are each glycosylated (N-linked (GlcNAc...) asparagine). Asp-363 is a catalytic residue. Residues Asn-535, Asn-555, Asn-703, and Asn-721 are each glycosylated (N-linked (GlcNAc...) asparagine).

Belongs to the glycosyl hydrolase 3 family. In terms of processing, glycosylated. The polyoligosaccharides are of the high-mannose type and are highly substituted with both phosphate and sulfate moieties.

The protein resides in the lysosome. The enzyme catalyses Hydrolysis of terminal, non-reducing beta-D-glucosyl residues with release of beta-D-glucose.. This is Lysosomal beta glucosidase (gluA) from Dictyostelium discoideum (Social amoeba).